A 341-amino-acid chain; its full sequence is Ferredoxin--NADP reductase (341 aa).

Residues glutamate 36, glutamine 44, phenylalanine 49, valine 89, phenylalanine 123, aspartate 289, and threonine 329 each contribute to the FAD site.

Belongs to the ferredoxin--NADP reductase type 2 family. As to quaternary structure, homodimer. The cofactor is FAD.

It carries out the reaction 2 reduced [2Fe-2S]-[ferredoxin] + NADP(+) + H(+) = 2 oxidized [2Fe-2S]-[ferredoxin] + NADPH. This chain is Ferredoxin--NADP reductase, found in Ligilactobacillus salivarius (strain UCC118) (Lactobacillus salivarius).